The sequence spans 180 residues: MLKLLSEIGPVIAFFAGFFYGGGIQNATLYMLITSIICITLCYIIDKKVSKLSIISSTVLFISGIITLISGDSMYIKIKPTILYVIFGIIFLMSGIKKNPFIKYALESIVRLKEESWIILSYRTAAFFFFMAVVNEVVWRNFSDETWVKFKVFGVIPITFIFILLQLPLLLKNKLPDSKI.

Transmembrane regions (helical) follow at residues 25-45 (QNAT…CYII), 49-69 (VSKL…ITLI), 76-96 (IKIK…MSGI), 118-138 (IILS…NEVV), and 150-170 (FKVF…LPLL).

The protein belongs to the YciB family.

Its subcellular location is the cell inner membrane. Functionally, plays a role in cell envelope biogenesis, maintenance of cell envelope integrity and membrane homeostasis. The polypeptide is Inner membrane-spanning protein YciB (Rickettsia prowazekii (strain Madrid E)).